We begin with the raw amino-acid sequence, 318 residues long: Protein W (318 aa).

Disordered stretches follow at residues 1 to 23 and 38 to 318; these read MDQD…GGRE and SEPT…KKGA. Residues 7-20 show a composition bias toward basic and acidic residues; it reads ILKEDSEVEREAPG. Positions 50–59 are enriched in polar residues; it reads LHNTINTPQG. Serine 68 carries the post-translational modification Phosphoserine; by host. Residues 83-101 are compositionally biased toward basic and acidic residues; that stretch reads RSGEESRVSGRTSKPEAEA. Serine 125 carries the post-translational modification Phosphoserine; by host. The span at 150–168 shows a compositional bias: basic and acidic residues; the sequence is GIEDENREMAAHPDKRGED. The span at 191–206 shows a compositional bias: polar residues; it reads ASNNGRSMEPGSSHSA. A phosphoserine; by host mark is found at serine 192, serine 249, serine 257, and serine 260.

The chain is Protein W (P/V/C) from Sendai virus (strain Harris) (SeV).